We begin with the raw amino-acid sequence, 461 residues long: Phytase A (461 aa).

A disulfide bridge connects residues cysteine 22 and cysteine 31. 1D-myo-inositol hexakisphosphate is bound by residues glutamine 41, tyrosine 42, arginine 71, histidine 72, arginine 75, and threonine 78. 4 disulfides stabilise this stretch: cysteine 61–cysteine 405, cysteine 205–cysteine 456, cysteine 254–cysteine 272, and cysteine 427–cysteine 435. Histidine 72 serves as the catalytic Nucleophile. N-linked (GlcNAc...) asparagine glycans are attached at residues asparagine 95 and asparagine 110. A 1D-myo-inositol hexakisphosphate-binding site is contributed by arginine 155. N-linked (GlcNAc...) asparagine glycosylation occurs at asparagine 197. Lysine 291 is a binding site for 1D-myo-inositol hexakisphosphate. 2 N-linked (GlcNAc...) asparagine glycosylation sites follow: asparagine 329 and asparagine 343. Residues histidine 352 and aspartate 353 each coordinate 1D-myo-inositol hexakisphosphate. The N-linked (GlcNAc...) asparagine glycan is linked to asparagine 367.

The protein belongs to the histidine acid phosphatase family. In terms of assembly, monomer. Glycosylated.

The protein resides in the secreted. The enzyme catalyses 1D-myo-inositol hexakisphosphate + H2O = 1D-myo-inositol 1,2,4,5,6-pentakisphosphate + phosphate. It carries out the reaction 1D-myo-inositol 1,2,4,5,6-pentakisphosphate + H2O = 1D-myo-inositol 1,2,5,6-tetrakisphosphate + phosphate. The catalysed reaction is 1D-myo-inositol 1,2,5,6-tetrakisphosphate + H2O = 1D-myo-inositol 1,2,6-trisphosphate + phosphate. It catalyses the reaction 1D-myo-inositol 1,2,6-trisphosphate + H2O = 1D-myo-inositol 1,2-bisphosphate + phosphate. The enzyme catalyses 1D-myo-inositol 1,2-bisphosphate + H2O = 1D-myo-inositol 2-phosphate + phosphate. Catalyzes the phosphate monoester hydrolysis of phytic acid (myo-inositol hexakisphosphate), which results in the stepwise formation of myo-inositol pentakis-, tetrakis-, tris-, bis-, and monophosphates, as well as the liberation of inorganic phosphate. Myo-inositol 2-monophosphate is the end product. The sequence is that of Phytase A from Penicillium oxalicum.